An 81-amino-acid polypeptide reads, in one-letter code: Photosystem I iron-sulfur center (81 aa).

4Fe-4S ferredoxin-type domains lie at 2–31 (AHSV…MVPW) and 39–68 (IASA…VRVY). The [4Fe-4S] cluster site is built by Cys11, Cys14, Cys17, Cys21, Cys48, Cys51, Cys54, and Cys58.

The eukaryotic PSI reaction center is composed of at least 11 subunits. [4Fe-4S] cluster is required as a cofactor.

The protein localises to the plastid. It localises to the chloroplast thylakoid membrane. It carries out the reaction reduced [plastocyanin] + hnu + oxidized [2Fe-2S]-[ferredoxin] = oxidized [plastocyanin] + reduced [2Fe-2S]-[ferredoxin]. Functionally, apoprotein for the two 4Fe-4S centers FA and FB of photosystem I (PSI); essential for photochemical activity. FB is the terminal electron acceptor of PSI, donating electrons to ferredoxin. The C-terminus interacts with PsaA/B/D and helps assemble the protein into the PSI complex. Required for binding of PsaD and PsaE to PSI. PSI is a plastocyanin-ferredoxin oxidoreductase, converting photonic excitation into a charge separation, which transfers an electron from the donor P700 chlorophyll pair to the spectroscopically characterized acceptors A0, A1, FX, FA and FB in turn. In Gnetum parvifolium (Small-leaved jointfir), this protein is Photosystem I iron-sulfur center.